We begin with the raw amino-acid sequence, 194 residues long: DPY30 domain-containing protein 2 (194 aa).

The disordered stretch occupies residues 126–172 (EAFEKEPLKQESLPGTSDMIPGMPQQSPSSEPSVSSQVDLNTGTPQE). Residues 149-163 (PQQSPSSEPSVSSQV) are compositionally biased toward low complexity.

Belongs to the dpy-30 family.

The sequence is that of DPY30 domain-containing protein 2 (DYDC2) from Bos taurus (Bovine).